The sequence spans 1221 residues: MLNGHVVNYGQHRTRRSFSRIKEILPLPNLTDVQTESYKWFLDEGVKEVFDDILPISDTSGRLTLEYVDYKLQEPKYTVDESRKHDATYSAPMHVTLKLTNHETGEIKTQDVFFGDLPLMTKSGSFIVNGAERVIVSQLVRSPGVYYSGEFDKNGRQIFGTTVIPNRGAWLEFETDAKNISYVRVDRTRKLPLSVLVRALGFGSDSEIKEIFGDSDTLDLTLDKDVHKNPADSRVAEALKDIYDRLRPGEPKTTDSSRSLLVSRFFDPRRYDLAAVGRYKVNKKLSLKNRLLGYTLAETLADPGTGEVLAAKGTVVNNEVMDVLKDYLDRDDFKTVTYTPSDEGVIPEPVTVQEIKVFSREIPDREIKLISNGHIAEDVKCITPADIIASVNYFLELQEGVGNIDDIDHLGNRRIRRVGELLQNQMRIGLARMERVVRERMSIQDAATVTPQQLINIRPIVGSIKEFFGSSQLSQFMDQNNPLGELTHKRRMSALGPGGLSRDRAGYEVRDVHYTHYGRLCPIETPEGPNIGLINSMATYAIINKYGFLETPYRRVSWATHKVTDKIDYLTADEEDNYIIAGANTPLNEDGSFVDDVILCRHREDNVEVSPDRIDYIDVIPKQVVSVTSACIPFLENDDSNRALMGANHQRQAVPLINPHGPLVATGMEYRAGHDSGDALLAEADGEVEYVDANEIRVRREDQTLDTYTLEKYRRSNATKNYNQTPNVKRGDKVVDGQVIANGPSMADGELALGQNPVIAFTTWNMYNFEDAIMLSERLVKEDVYTSIHIEDYDSEARDTKLGPEEITREIPNVGEDALKDLDENGIIRIGAEVHDGDILVGKVTPKGITELSAEERLLHAIFGEKAREVRDTSLRVPHGGGGVVQDVQVFTREAGDELAPGVNTLVRVYIVQKRKIQVGDKMSGRHGNKGTVALIAPVEDMPYLPDGTPVDICLNPMGVPSRMNIGQLLEIHLGRAARALGIHVATPVFDGASEDDVWDFVREAGVDSDGKTVLYDGRTGEPFHNRVSVGVMYYLKLTHMVDDKIHARSIGPYSLVTQQPLGGKAQFGGQRFGEMEVWALEAYGAAYTLQEILTYKSDDVVGRVKAYEAIVKGERITKPGVPESFRVLVKELQSLGLDLRVLDSDENEVELRDMDEDSNEHVNIDALSRLAEAQEKKKLAEEEAEIAAEAEAEGSAEGDAAEADADANEAETADDDKASK.

The segment at 1176–1221 (EKKKLAEEEAEIAAEAEAEGSAEGDAAEADADANEAETADDDKASK) is disordered. The span at 1183–1215 (EEAEIAAEAEAEGSAEGDAAEADADANEAETAD) shows a compositional bias: acidic residues.

The protein belongs to the RNA polymerase beta chain family. The RNAP catalytic core consists of 2 alpha, 1 beta, 1 beta' and 1 omega subunit. When a sigma factor is associated with the core the holoenzyme is formed, which can initiate transcription.

The enzyme catalyses RNA(n) + a ribonucleoside 5'-triphosphate = RNA(n+1) + diphosphate. DNA-dependent RNA polymerase catalyzes the transcription of DNA into RNA using the four ribonucleoside triphosphates as substrates. The chain is DNA-directed RNA polymerase subunit beta from Lactobacillus delbrueckii subsp. bulgaricus (strain ATCC 11842 / DSM 20081 / BCRC 10696 / JCM 1002 / NBRC 13953 / NCIMB 11778 / NCTC 12712 / WDCM 00102 / Lb 14).